Reading from the N-terminus, the 131-residue chain is Small ribosomal subunit protein uS8 (131 aa).

It belongs to the universal ribosomal protein uS8 family. Part of the 30S ribosomal subunit. Contacts proteins S5 and S12.

Functionally, one of the primary rRNA binding proteins, it binds directly to 16S rRNA central domain where it helps coordinate assembly of the platform of the 30S subunit. This Dictyoglomus turgidum (strain DSM 6724 / Z-1310) protein is Small ribosomal subunit protein uS8.